Reading from the N-terminus, the 248-residue chain is Small ribosomal subunit protein uS3 (248 aa).

The region spanning 39–107 is the KH type-2 domain; sequence IRQMLLKQLK…EVFINIVEIR (69 aa). A disordered region spans residues 214 to 248; that stretch reads AVDKRMTAESEGPSSGRPPRRDRDRDRDRDRDSAA. A compositionally biased stretch (basic and acidic residues) spans 232-248; that stretch reads PRRDRDRDRDRDRDSAA.

The protein belongs to the universal ribosomal protein uS3 family. In terms of assembly, part of the 30S ribosomal subunit. Forms a tight complex with proteins S10 and S14.

Functionally, binds the lower part of the 30S subunit head. Binds mRNA in the 70S ribosome, positioning it for translation. In Azorhizobium caulinodans (strain ATCC 43989 / DSM 5975 / JCM 20966 / LMG 6465 / NBRC 14845 / NCIMB 13405 / ORS 571), this protein is Small ribosomal subunit protein uS3.